The chain runs to 76 residues: Adropin (76 aa).

The first 33 residues, 1–33, serve as a signal peptide directing secretion; sequence MGAALSQGALIAIICNGLVGFLLLLLWVILCWA. Residues 41 to 76 are disordered; it reads IDSLSESSPNSSPGPCPEKAPPPQKPSHEGSYLLQP. Residues 52 to 65 are compositionally biased toward pro residues; sequence SPGPCPEKAPPPQK.

It localises to the secreted. Its function is as follows. Involved in the regulation of glucose homeostasis and lipid metabolism. The chain is Adropin (ENHO) from Bos taurus (Bovine).